The following is a 96-amino-acid chain: Uteroglobin (96 aa).

The first 19 residues, 1-19 (MKIAITITVLMLSICCSSA), serve as a signal peptide directing secretion.

The protein belongs to the secretoglobin family. In terms of assembly, antiparallel homodimer; disulfide-linked. Interaction with LMBR1L is controversial. As to expression, club cells (nonciliated cells of the surface epithelium of the pulmonary airways).

It is found in the secreted. Its function is as follows. Binds phosphatidylcholine, phosphatidylinositol, polychlorinated biphenyls (PCB) and weakly progesterone, potent inhibitor of phospholipase A2. In Rattus norvegicus (Rat), this protein is Uteroglobin (Scgb1a1).